The sequence spans 246 residues: 4-hydroxy-tetrahydrodipicolinate reductase (246 aa).

NAD(+)-binding positions include 7-12 (GATGRT), 84-86 (GTT), and 108-111 (ASNF). Histidine 140 acts as the Proton donor/acceptor in catalysis. Histidine 141 provides a ligand contact to (S)-2,3,4,5-tetrahydrodipicolinate. The active-site Proton donor is lysine 144. A (S)-2,3,4,5-tetrahydrodipicolinate-binding site is contributed by 150 to 151 (GT).

The protein belongs to the DapB family.

The protein localises to the cytoplasm. The catalysed reaction is (S)-2,3,4,5-tetrahydrodipicolinate + NAD(+) + H2O = (2S,4S)-4-hydroxy-2,3,4,5-tetrahydrodipicolinate + NADH + H(+). It catalyses the reaction (S)-2,3,4,5-tetrahydrodipicolinate + NADP(+) + H2O = (2S,4S)-4-hydroxy-2,3,4,5-tetrahydrodipicolinate + NADPH + H(+). It participates in amino-acid biosynthesis; L-lysine biosynthesis via DAP pathway; (S)-tetrahydrodipicolinate from L-aspartate: step 4/4. Catalyzes the conversion of 4-hydroxy-tetrahydrodipicolinate (HTPA) to tetrahydrodipicolinate. This chain is 4-hydroxy-tetrahydrodipicolinate reductase, found in Natronomonas pharaonis (strain ATCC 35678 / DSM 2160 / CIP 103997 / JCM 8858 / NBRC 14720 / NCIMB 2260 / Gabara) (Halobacterium pharaonis).